A 768-amino-acid polypeptide reads, in one-letter code: MMDQARSAFSSLFGGEPLSYTRFSLARQVDGDNSHVEMKLAADEEENVDSNTRSNHIGVAKPKRLNGYVCYGIIAVITFFLIGFMIGYLAYCKRVESKTDCKTLVPTEPSETEETETFEAENFPQTPRLFWADLKILLSKGLDTTDFTRTIKMLNEDYAPREAGSQKDESLGFFIENQFREFKLSKVWHDEHFVKIQVKGSNAENSVTLVNTDSNSLVYPVESPEGYVAYSKATTVTGKLIFANFGTKKDFEDLKMPVNGSLVIVRAGKITFAEKVANAQSLDAIGVLIYMDRANFPIINADVPVFGHAHLGTGDPYTPGFPSFNHTQFPPSQSSGLPNIPVQTISRAGAEKLFGNMEQDCPLTWRTDFPCKLVSSPSKNVKLTVNNVLKEIKILNIFGVIKGFEEPDRYVIVGAQRDAWGPGAAKSSVGTSLLLNLAQILSDMVIKGQFKPSRSIVFASWSAGDFGAIGATEWLEGYLSSLHLKAFTYINLDKAVLGTSNFKVSASPLLYSLIEKMMQDVKNPVTGQSLYRDSNWINKVEKLSFDDAAFPFLAYSGIPAVSFCFCEDTDYPYLGTTMDTYDVLSKRVPQLNRMARAAAEVAGHLVIKLTIDFELNLNYEMYNDKILSFVREMNQFRVDIREMGLSLQWLYSARGDFFRATSRLTSDYRNVETRDKFVMREINDRIMKVEYHFLSPYVSPRESPFRHIFWGSGSHTLSALVEHLKLRQKNSSAFNQTLLKNQLALATWTIQGAANALSGDIWDIDNEF.

The Cytoplasmic segment spans residues 1–68 (MMDQARSAFS…VAKPKRLNGY (68 aa)). The mediates interaction with SH3BP4 stretch occupies residues 1-70 (MMDQARSAFS…KPKRLNGYVC (70 aa)). Phosphoserine is present on residues S10 and S19. Y20 is subject to Phosphotyrosine. Residues 20–23 (YTRF) carry the Endocytosis signal motif. At T21 the chain carries Phosphothreonine. A Phosphoserine modification is found at S24. Residues 61 to 64 (KPKR) carry the Stop-transfer sequence motif. The helical transmembrane segment at 69-89 (VCYGIIAVITFFLIGFMIGYL) threads the bilayer. A lipid anchor (S-palmitoyl cysteine) is attached at C70. Topologically, residues 90-768 (AYCKRVESKT…GDIWDIDNEF (679 aa)) are extracellular. The 91-residue stretch at 231-321 (SKATTVTGKL…GTGDPYTPGF (91 aa)) folds into the PA domain. Residues N259 and N325 are each glycosylated (N-linked (GlcNAc...) asparagine). Residues 577-768 (TMDTYDVLSK…GDIWDIDNEF (192 aa)) form a ligand-binding region. The Cell attachment site motif lies at 654–656 (RGD). N730 and N735 each carry an N-linked (GlcNAc...) asparagine glycan.

It belongs to the peptidase M28 family. M28B subfamily. As to quaternary structure, homodimer; disulfide-linked. Binds one transferrin or HFE molecule per subunit. Interacts with SH3BP4. Interacts with SH3BP3. Interacts with STEAP3; facilitates TFRC endocytosis in erythroid precursor cells. Stearoylated by ZDHHC6 which inhibits TFRC-mediated activation of the JNK pathway and promotes mitochondrial fragmentation. Stearoylation does not affect iron uptake.

It localises to the cell membrane. It is found in the melanosome. Its function is as follows. Cellular uptake of iron occurs via receptor-mediated endocytosis of ligand-occupied transferrin receptor into specialized endosomes. Endosomal acidification leads to iron release. The apotransferrin-receptor complex is then recycled to the cell surface with a return to neutral pH and the concomitant loss of affinity of apotransferrin for its receptor. Transferrin receptor is necessary for development of erythrocytes and the nervous system. Positively regulates T and B cell proliferation through iron uptake. Acts as a lipid sensor that regulates mitochondrial fusion by regulating activation of the JNK pathway. When dietary levels of stearate (C18:0) are low, promotes activation of the JNK pathway, resulting in HUWE1-mediated ubiquitination and subsequent degradation of the mitofusin MFN2 and inhibition of mitochondrial fusion. When dietary levels of stearate (C18:0) are high, TFRC stearoylation inhibits activation of the JNK pathway and thus degradation of the mitofusin MFN2. Mediates uptake of NICOL1 into fibroblasts where it may regulate extracellular matrix production. This chain is Transferrin receptor protein 1 (TFRC), found in Sus scrofa (Pig).